Consider the following 159-residue polypeptide: Transcriptional repressor NrdR (159 aa).

The segment at 3-34 (CPYCQSEDTQVKDSRPAEDGAAIRRRRVCPDC) is a zinc-finger region. The ATP-cone domain maps to 49–139 (LVVVKKSGRK…VYRNFREAKD (91 aa)).

Belongs to the NrdR family. Zn(2+) serves as cofactor.

Negatively regulates transcription of bacterial ribonucleotide reductase nrd genes and operons by binding to NrdR-boxes. This is Transcriptional repressor NrdR from Mesorhizobium japonicum (strain LMG 29417 / CECT 9101 / MAFF 303099) (Mesorhizobium loti (strain MAFF 303099)).